A 338-amino-acid chain; its full sequence is 1-aminocyclopropane-1-carboxylate deaminase (338 aa).

Lys51 carries the post-translational modification N6-(pyridoxal phosphate)lysine. Ser78 acts as the Nucleophile in catalysis.

Belongs to the ACC deaminase/D-cysteine desulfhydrase family. As to quaternary structure, homotrimer. It depends on pyridoxal 5'-phosphate as a cofactor.

The catalysed reaction is 1-aminocyclopropane-1-carboxylate + H2O = 2-oxobutanoate + NH4(+). Functionally, catalyzes a cyclopropane ring-opening reaction, the irreversible conversion of 1-aminocyclopropane-1-carboxylate (ACC) to ammonia and alpha-ketobutyrate. Allows growth on ACC as a nitrogen source. The sequence is that of 1-aminocyclopropane-1-carboxylate deaminase from Pseudomonas syringae pv. tomato (strain ATCC BAA-871 / DC3000).